The following is a 277-amino-acid chain: Formamidopyrimidine-DNA glycosylase (277 aa).

The active-site Schiff-base intermediate with DNA is the Pro-2. The Proton donor role is filled by Glu-3. The active-site Proton donor; for beta-elimination activity is Lys-58. DNA-binding residues include His-95, Arg-113, and Arg-158. An FPG-type zinc finger spans residues 243-277 (GVYDRANQPCLRCGGVVRQIRQAGRSTYYCTGCQH). Arg-267 acts as the Proton donor; for delta-elimination activity in catalysis.

It belongs to the FPG family. As to quaternary structure, monomer. Zn(2+) is required as a cofactor.

It catalyses the reaction Hydrolysis of DNA containing ring-opened 7-methylguanine residues, releasing 2,6-diamino-4-hydroxy-5-(N-methyl)formamidopyrimidine.. The enzyme catalyses 2'-deoxyribonucleotide-(2'-deoxyribose 5'-phosphate)-2'-deoxyribonucleotide-DNA = a 3'-end 2'-deoxyribonucleotide-(2,3-dehydro-2,3-deoxyribose 5'-phosphate)-DNA + a 5'-end 5'-phospho-2'-deoxyribonucleoside-DNA + H(+). In terms of biological role, involved in base excision repair of DNA damaged by oxidation or by mutagenic agents. Acts as a DNA glycosylase that recognizes and removes damaged bases. Has a preference for oxidized purines, such as 7,8-dihydro-8-oxoguanine (8-oxoG). Has AP (apurinic/apyrimidinic) lyase activity and introduces nicks in the DNA strand. Cleaves the DNA backbone by beta-delta elimination to generate a single-strand break at the site of the removed base with both 3'- and 5'-phosphates. The polypeptide is Formamidopyrimidine-DNA glycosylase (Dechloromonas aromatica (strain RCB)).